The sequence spans 243 residues: UPF0502 protein H16_B1091 (243 aa).

The segment at Met-1–Pro-23 is disordered.

The protein belongs to the UPF0502 family.

The chain is UPF0502 protein H16_B1091 from Cupriavidus necator (strain ATCC 17699 / DSM 428 / KCTC 22496 / NCIMB 10442 / H16 / Stanier 337) (Ralstonia eutropha).